The primary structure comprises 445 residues: Adenylosuccinate synthetase (445 aa).

Residues 24–30 (GDEGKGK) and 52–54 (GHT) contribute to the GTP site. Residue aspartate 25 is the Proton acceptor of the active site. Residues aspartate 25 and glycine 52 each contribute to the Mg(2+) site. IMP is bound by residues 25–28 (DEGK), 50–53 (NAGH), threonine 147, arginine 161, asparagine 238, threonine 253, and arginine 317. The active-site Proton donor is histidine 53. 313–319 (TTTGRRR) provides a ligand contact to substrate. Residues arginine 319, 345–347 (KLD), and 427–429 (GVG) each bind GTP.

The protein belongs to the adenylosuccinate synthetase family. Homodimer. The cofactor is Mg(2+).

The protein localises to the cytoplasm. The catalysed reaction is IMP + L-aspartate + GTP = N(6)-(1,2-dicarboxyethyl)-AMP + GDP + phosphate + 2 H(+). The protein operates within purine metabolism; AMP biosynthesis via de novo pathway; AMP from IMP: step 1/2. Its function is as follows. Plays an important role in the de novo pathway and in the salvage pathway of purine nucleotide biosynthesis. Catalyzes the first committed step in the biosynthesis of AMP from IMP. This Malassezia globosa (strain ATCC MYA-4612 / CBS 7966) (Dandruff-associated fungus) protein is Adenylosuccinate synthetase.